The primary structure comprises 515 residues: UDP-glucosyltransferase 2 (515 aa).

The N-terminal stretch at 1–20 (MEFRLLILALFSVLMSTSNG) is a signal peptide. Residues 21–471 (AEILALFPIH…TAGAFLHWYQ (451 aa)) are Lumenal-facing. N-linked (GlcNAc...) asparagine glycosylation is found at Asn51, Asn236, and Asn303. A helical transmembrane segment spans residues 472-492 (YLLLDVITFLLVTFCAFCFIV). Residues 493–515 (KYICKALIHHYWSSSKSEKLKKN) are Cytoplasmic-facing.

The protein belongs to the UDP-glycosyltransferase family. Glycosylated.

It localises to the endoplasmic reticulum membrane. The enzyme catalyses kermesate + UDP-alpha-D-glucose = carminate + UDP + 2 H(+). The catalysed reaction is flavokermesate + UDP-alpha-D-glucose = flavokermesate 7-C-beta-D-glucoside + UDP + 2 H(+). In terms of biological role, membrane-bound UDP-glucosyltransferase (UGT) which catalyzes the C-glucosylation of kermesate and flavokermesate to produce carminate and flavokermesate 7-C-beta-D-glucoside (dcll) respectively. Carminate is used as a deterrent against insect predators. This chain is UDP-glucosyltransferase 2, found in Dactylopius coccus (Cochineal).